A 234-amino-acid chain; its full sequence is Small ribosomal subunit protein uS3 (234 aa).

In terms of domain architecture, KH type-2 spans 39-108 (IRKFVKKKLF…TVIVNVVEVK (70 aa)). Residues 212 to 234 (KGKNEETNNETADNSRGRRREAK) are disordered.

This sequence belongs to the universal ribosomal protein uS3 family. Part of the 30S ribosomal subunit. Forms a tight complex with proteins S10 and S14.

Binds the lower part of the 30S subunit head. Binds mRNA in the 70S ribosome, positioning it for translation. In Alkaliphilus metalliredigens (strain QYMF), this protein is Small ribosomal subunit protein uS3.